The primary structure comprises 332 residues: Ribose-phosphate pyrophosphokinase (332 aa).

55–57 (DGE) provides a ligand contact to ATP. Residues His-148 and Asp-187 each contribute to the Mg(2+) site. Residue Lys-211 is part of the active site. D-ribose 5-phosphate contacts are provided by residues Arg-213, Asp-237, and 241–245 (DTGGT).

Belongs to the ribose-phosphate pyrophosphokinase family. Class I subfamily. Homohexamer. The cofactor is Mg(2+).

Its subcellular location is the cytoplasm. The enzyme catalyses D-ribose 5-phosphate + ATP = 5-phospho-alpha-D-ribose 1-diphosphate + AMP + H(+). It functions in the pathway metabolic intermediate biosynthesis; 5-phospho-alpha-D-ribose 1-diphosphate biosynthesis; 5-phospho-alpha-D-ribose 1-diphosphate from D-ribose 5-phosphate (route I): step 1/1. Functionally, involved in the biosynthesis of the central metabolite phospho-alpha-D-ribosyl-1-pyrophosphate (PRPP) via the transfer of pyrophosphoryl group from ATP to 1-hydroxyl of ribose-5-phosphate (Rib-5-P). The protein is Ribose-phosphate pyrophosphokinase of Prochlorococcus marinus (strain MIT 9313).